A 629-amino-acid polypeptide reads, in one-letter code: MNSNTDLHHSDDQDFSEFLNEYYLQSNSQSIEPEASYEDGEMEAEWLVSAGYPELTKPFEQGLEVSKKDLEPILTTLSKPHAEAIVQLVRTLNKTVRVRTKSRPKRKPDIRDVFREFDEQGTVTRSRSATPDSLDSLQIDEAWTNNSLPTFVNVYEKNTETAIQCVEQSNEIYLKQNLRRTPSAPPKSGTYADIFRGSQVRCDIPLYSADGVELLGYSRIGTIQFPRNRSVSDPFCSIGRSKESRSENDARSQKKKSSEVLSASENECGRLLPMPYNVLSFESICRDSSSLDSCEVLDTCDIPSTLFTDVVLISETDMKRLQTILWLELATIFDRNKVSLDKRKPFKRRRKEEGNLFGVSINALIRRDQQVTGTDSSLVPLFLEKLIGELLRRGSREEGLLRIGGHKQKTELLYNELESTFYQNPDNLDNLFRTATVHELSSLLKRWLRELPQPLLTNELIQLFYQCHTLPSIDQMNALSILCHLLPPENRNTLRSLLSFFNIIINLKDINKMNVHNVATIMAPSMFPPRYIHPSDNNSIAEQVRMAAQCCRLTNILILRGEKLFQVPNNLIVESQKTMMGKKGWHRHRNSNEITAKPSGKASNVGVGHDSTVINKYSTNLKHLHPFVI.

The interval 185-294 is required for interaction with Moe; sequence PPKSGTYADI…CRDSSSLDSC (110 aa). The segment at 237–261 is disordered; the sequence is SIGRSKESRSENDARSQKKKSSEVL. The span at 240–258 shows a compositional bias: basic and acidic residues; it reads RSKESRSENDARSQKKKSS. The region spanning 359–565 is the Rho-GAP domain; that stretch reads VSINALIRRD…ILILRGEKLF (207 aa).

As to quaternary structure, interacts with Moe (via FERM domain).

It localises to the cytoplasm. The protein resides in the cell membrane. The protein localises to the cell cortex. Its subcellular location is the cell junction. In terms of biological role, GTPase-activating protein (GAP) for Rho1; functions with the ERM protein Moe to regulate Rho1 and control proliferation in the developing epithelium. Recruited by Moe to the cell cortex where it negatively regulates Rho1 activity. Can also promote cell proliferation independently of its GAP activity, perhaps by acting with Arf6 to positively regulate Rac1. The protein is Rho GTPase-activating protein conundrum of Drosophila melanogaster (Fruit fly).